Reading from the N-terminus, the 408-residue chain is UPF0761 membrane protein Avin_36810 (408 aa).

6 consecutive transmembrane segments (helical) span residues 33 to 53 (YTALFAVVPIMTLIFVVLSVV), 92 to 112 (HLTWLGVGVLMVTALLMLMTV), 132 to 152 (FLLHWAILSLGPLLLGTGFAL), 174 to 194 (LLKVMPLLFSTAAFTLLYVAV), 209 to 229 (LFAAVLFEAAKGLFGLYVALF), and 238 to 258 (AFAAVPLFLLWMYLSWMIVLL).

This sequence belongs to the UPF0761 family.

The protein localises to the cell inner membrane. The protein is UPF0761 membrane protein Avin_36810 of Azotobacter vinelandii (strain DJ / ATCC BAA-1303).